The sequence spans 250 residues: 3-deoxy-manno-octulosonate cytidylyltransferase (250 aa).

This sequence belongs to the KdsB family.

It localises to the cytoplasm. It catalyses the reaction 3-deoxy-alpha-D-manno-oct-2-ulosonate + CTP = CMP-3-deoxy-beta-D-manno-octulosonate + diphosphate. Its pathway is nucleotide-sugar biosynthesis; CMP-3-deoxy-D-manno-octulosonate biosynthesis; CMP-3-deoxy-D-manno-octulosonate from 3-deoxy-D-manno-octulosonate and CTP: step 1/1. It functions in the pathway bacterial outer membrane biogenesis; lipopolysaccharide biosynthesis. In terms of biological role, activates KDO (a required 8-carbon sugar) for incorporation into bacterial lipopolysaccharide in Gram-negative bacteria. In Geobacter sulfurreducens (strain ATCC 51573 / DSM 12127 / PCA), this protein is 3-deoxy-manno-octulosonate cytidylyltransferase.